The following is a 166-amino-acid chain: Endoribonuclease YbeY (166 aa).

Zn(2+)-binding residues include H132, H136, and H142.

Belongs to the endoribonuclease YbeY family. The cofactor is Zn(2+).

It localises to the cytoplasm. Functionally, single strand-specific metallo-endoribonuclease involved in late-stage 70S ribosome quality control and in maturation of the 3' terminus of the 16S rRNA. This is Endoribonuclease YbeY from Clostridium botulinum (strain Alaska E43 / Type E3).